The following is a 626-amino-acid chain: MMLRFILASLLLSSFSLYSSLARPAPYALRISCGARKNVRTPPTYALWFKDIAYTGGVPANATTPTYITPPLKTLRYFPISEGPNNCYNIVRVPKGHYSVRIFFGLVDQPSFDKEPLFDISIEGTQISSLKSGWSSQDDQVFAEALIFLLGGTATICFHSTGHGDPAILSIEILQVDDKAYSFGEGWGQGVILRTATRLTCGTGKSRFDEDYRGDHWGGDRFWNRMRSFGKSADSPRSTEETIKKASVSPNFYPEGLYQSALVSTDDQPDLTYSLDVEPNRNYSVWLHFAEIDNTITAEGKRVFDVVINGDTFFEDVDIIKMSGGRYAALVLNATVTVSGRTLTVVLQPKAGGHAIINAIEVFEIITAEFKTLRDEVSALQKMKKALGLPSRFGWNGDPCVPPQHPWSGANCQLDKNTSRWFIDGLDLDNQGLKGFLPNDISKLKHLQSINLSENNIRGGIPASLGSVTSLEVLDLSYNSFNGSIPETLGELTSLRILNLNGNSLSGKVPAAVGGRLLHRASFNFTDNAGLCGIPGLPACGPHLSSGAKIGIAFGVSLAFLLIVACAMIWWKRRQNILRAQQIAARGAPYAKKRTHVSHDIQMSRHGHNNHGQARTAVENGPSLLS.

Residues 1 to 22 (MMLRFILASLLLSSFSLYSSLA) form the signal peptide. The Extracellular segment spans residues 23–549 (RPAPYALRIS…CGPHLSSGAK (527 aa)). N61, N282, N333, and N417 each carry an N-linked (GlcNAc...) asparagine glycan. LRR repeat units lie at residues 420–444 (RWFI…ISKL), 445–468 (KHLQ…LGSV), 470–492 (SLEV…LGEL), and 493–516 (TSLR…VGGR). N-linked (GlcNAc...) asparagine glycosylation is found at N451 and N482. The N-linked (GlcNAc...) asparagine glycan is linked to N524. Residues 550–570 (IGIAFGVSLAFLLIVACAMIW) form a helical membrane-spanning segment. Residues 571–626 (WKRRQNILRAQQIAARGAPYAKKRTHVSHDIQMSRHGHNNHGQARTAVENGPSLLS) are Cytoplasmic-facing. A disordered region spans residues 603–626 (MSRHGHNNHGQARTAVENGPSLLS).

This sequence belongs to the RLP family.

The protein resides in the cell membrane. This Arabidopsis thaliana (Mouse-ear cress) protein is Receptor-like protein 4.